The sequence spans 673 residues: eEF1A lysine and N-terminal methyltransferase homolog (673 aa).

It belongs to the methyltransferase superfamily.

It carries out the reaction L-lysyl-[protein] + S-adenosyl-L-methionine = N(6)-methyl-L-lysyl-[protein] + S-adenosyl-L-homocysteine + H(+). The catalysed reaction is N(6)-methyl-L-lysyl-[protein] + S-adenosyl-L-methionine = N(6),N(6)-dimethyl-L-lysyl-[protein] + S-adenosyl-L-homocysteine + H(+). It catalyses the reaction N-terminal glycyl-L-lysyl-L-glutamyl-[protein] + 3 S-adenosyl-L-methionine = N-terminal N,N,N-trimethyl-glycyl-L-lysyl-L-glutamyl-[protein] + 3 S-adenosyl-L-homocysteine + 3 H(+). In terms of biological role, dual methyltransferase. It catalyzes N-terminal methylation of target proteins via its C-terminus. It catalyzes dimethylation on lysine residues of target proteins via its N-terminus. The polypeptide is eEF1A lysine and N-terminal methyltransferase homolog (Drosophila melanogaster (Fruit fly)).